Here is a 380-residue protein sequence, read N- to C-terminus: Cytochrome b (380 aa).

4 helical membrane-spanning segments follow: residues 34–54 (FGSLLGICLLTQILTGLLLAT), 78–99 (WLIRNLHANGASFFFICIYLHI), 114–134 (WNTGVILLLALMATAFVGYVL), and 179–199 (FFALHFLLPFMIAGLALIHLT). Residues His-84 and His-98 each contribute to the heme b site. His-183 and His-197 together coordinate heme b. An a ubiquinone-binding site is contributed by His-202. The next 4 helical transmembrane spans lie at 227–247 (LKDILGFIIMFLPLTTLALFS), 289–309 (LGGVLALAASVLVLFLAPLLH), 321–341 (FSQFLFWTLAANLFILTWVGS), and 348–368 (FIIIGQLASLTYFTILLLLFP).

It belongs to the cytochrome b family. In terms of assembly, the cytochrome bc1 complex contains 11 subunits: 3 respiratory subunits (MT-CYB, CYC1 and UQCRFS1), 2 core proteins (UQCRC1 and UQCRC2) and 6 low-molecular weight proteins (UQCRH/QCR6, UQCRB/QCR7, UQCRQ/QCR8, UQCR10/QCR9, UQCR11/QCR10 and a cleavage product of UQCRFS1). This cytochrome bc1 complex then forms a dimer. Heme b serves as cofactor.

The protein localises to the mitochondrion inner membrane. In terms of biological role, component of the ubiquinol-cytochrome c reductase complex (complex III or cytochrome b-c1 complex) that is part of the mitochondrial respiratory chain. The b-c1 complex mediates electron transfer from ubiquinol to cytochrome c. Contributes to the generation of a proton gradient across the mitochondrial membrane that is then used for ATP synthesis. This chain is Cytochrome b (MT-CYB), found in Alca torda (Razorbill).